The sequence spans 203 residues: Probable cytochrome c oxidase subunit 3 (203 aa).

A run of 5 helical transmembrane segments spans residues 30-50 (IVWL…YFTA), 70-90 (AVPV…GVFA), 102-122 (WYVI…YEYY), 142-162 (LATG…IFLL), and 179-199 (IVVS…FTVI).

This sequence belongs to the cytochrome c oxidase subunit 3 family.

Its subcellular location is the cell membrane. It catalyses the reaction 4 Fe(II)-[cytochrome c] + O2 + 8 H(+)(in) = 4 Fe(III)-[cytochrome c] + 2 H2O + 4 H(+)(out). The protein is Probable cytochrome c oxidase subunit 3 (ctaE) of Mycolicibacterium paratuberculosis (strain ATCC BAA-968 / K-10) (Mycobacterium paratuberculosis).